The following is a 208-amino-acid chain: Thymidylate kinase (208 aa).

Residue 10–17 (GPEGSGKS) participates in ATP binding.

This sequence belongs to the thymidylate kinase family.

The enzyme catalyses dTMP + ATP = dTDP + ADP. Phosphorylation of dTMP to form dTDP in both de novo and salvage pathways of dTTP synthesis. The polypeptide is Thymidylate kinase (Bacillus cytotoxicus (strain DSM 22905 / CIP 110041 / 391-98 / NVH 391-98)).